The primary structure comprises 81 residues: uncharacterized protein (81 aa).

This is an uncharacterized protein from Saccharomyces cerevisiae (strain ATCC 204508 / S288c) (Baker's yeast).